A 312-amino-acid chain; its full sequence is DNA-directed RNA polymerase subunit alpha (312 aa).

Positions 1-229 are alpha N-terminal domain (alpha-NTD); it reads MLQYQIDRIE…ELFQPLATVT (229 aa). The tract at residues 245–312 is alpha C-terminal domain (alpha-CTD); the sequence is QIPLEELNLS…ISIPQSRTSA (68 aa).

This sequence belongs to the RNA polymerase alpha chain family. In cyanobacteria the RNAP catalytic core is composed of 2 alpha, 1 beta, 1 beta', 1 gamma and 1 omega subunit. When a sigma factor is associated with the core the holoenzyme is formed, which can initiate transcription.

The catalysed reaction is RNA(n) + a ribonucleoside 5'-triphosphate = RNA(n+1) + diphosphate. Its function is as follows. DNA-dependent RNA polymerase catalyzes the transcription of DNA into RNA using the four ribonucleoside triphosphates as substrates. This is DNA-directed RNA polymerase subunit alpha from Prochlorococcus marinus (strain MIT 9313).